The primary structure comprises 154 residues: SsrA-binding protein (154 aa).

This sequence belongs to the SmpB family.

The protein localises to the cytoplasm. Required for rescue of stalled ribosomes mediated by trans-translation. Binds to transfer-messenger RNA (tmRNA), required for stable association of tmRNA with ribosomes. tmRNA and SmpB together mimic tRNA shape, replacing the anticodon stem-loop with SmpB. tmRNA is encoded by the ssrA gene; the 2 termini fold to resemble tRNA(Ala) and it encodes a 'tag peptide', a short internal open reading frame. During trans-translation Ala-aminoacylated tmRNA acts like a tRNA, entering the A-site of stalled ribosomes, displacing the stalled mRNA. The ribosome then switches to translate the ORF on the tmRNA; the nascent peptide is terminated with the 'tag peptide' encoded by the tmRNA and targeted for degradation. The ribosome is freed to recommence translation, which seems to be the essential function of trans-translation. In Streptococcus thermophilus (strain CNRZ 1066), this protein is SsrA-binding protein.